Reading from the N-terminus, the 507-residue chain is Transcription factor SOX-9 (507 aa).

Disordered regions lie at residues 1–67 (MNLL…SEED) and 160–250 (RLRV…AGKV). Low complexity predominate over residues 30–41 (SAGSPCPSGSGS). Over residues 42–52 (DTENTRPQENT) the composition is skewed to polar residues. Basic and acidic residues-rich tracts occupy residues 56-67 (GEPDLKKESEED) and 160-174 (RLRV…DYKY). The dimerization (DIM) stretch occupies residues 63 to 103 (ESEEDKFPVCIREAVSQVLKGYDWTLVPMPVRVNGSSKNKP). Positions 63-103 (ESEEDKFPVCIREAVSQVLKGYDWTLVPMPVRVNGSSKNKP) are PQA. Residue serine 64 is modified to Phosphoserine. A DNA-binding region (HMG box) is located at residues 105–173 (VKRPMNAFMV…QHKKDHPDYK (69 aa)). A Phosphoserine modification is found at serine 211. The interval 224–307 (PGEHSGQSQG…LPPNGHPGVP (84 aa)) is transactivation domain (TAM). 2 short sequence motifs (9aaTAD) span residues 275–284 (IGELSSDVIS) and 290–298 (DVNEFDQYL). The segment at 335–429 (WMSKQQAPPP…PFNLPHYNPS (95 aa)) is disordered. Over residues 341 to 369 (APPPPPQQPPQAPQAPQAPPQQQAPPQPQ) the composition is skewed to pro residues. Polar residues predominate over residues 378–420 (HTLTTLSSEPGQSQRTHIKTEQLSPSHYSEQQQHSPQQISYSP). A transactivation domain (TAC) region spans residues 392-507 (RTHIKTEQLS…QPVYTQLTRP (116 aa)). Residue lysine 396 forms a Glycyl lysine isopeptide (Lys-Gly) (interchain with G-Cter in ubiquitin) linkage. Positions 458-466 (SGLYSTFTY) match the 9aaTAD 3 motif. The segment at 477 to 507 (PIADTSGVPSIPQTHSPQHWEQPVYTQLTRP) is disordered. Positions 483 to 507 (GVPSIPQTHSPQHWEQPVYTQLTRP) are enriched in polar residues.

Homodimer; homodimerization is required for activity. Interacts (via C-terminus) with ZNF219; forming a complex that binds to the COL2A1 promoter and activates COL2A1 expression. Interacts with DDRGK1. Interacts with EP300/p300. Interacts with beta-catenin (CTNNB1); inhibiting CTNNB1 activity by competing with the binding sites of TCF/LEF within CTNNB1. In terms of processing, acetylated; acetylation impairs nuclear localization and ability to transactivate expression of target genes. Deacetylated by SIRT1. Post-translationally, phosphorylation at Ser-64 and Ser-211 by PKA increases transcriptional activity and may help delay chondrocyte maturation downstream of PTHLH/PTHrP signaling. Phosphorylation at either Ser-64 or Ser-211 is required for sumoylation, but phosphorylation is not dependent on sumoylation. Phosphorylated on tyrosine residues; tyrosine dephosphorylation by PTPN11/SHP2 blocks SOX9 phosphorylation by PKA and subsequent SUMOylation. Sumoylated; phosphorylation at either Ser-64 or Ser-211 is required for sumoylation. Sumoylation is induced by BMP signaling pathway. In terms of processing, ubiquitinated; ubiquitination leads to proteasomal degradation and is negatively regulated by DDRGK1.

The protein localises to the nucleus. Its function is as follows. Transcription factor that plays a key role in chondrocytes differentiation and skeletal development. Specifically binds the 5'-ACAAAG-3' DNA motif present in enhancers and super-enhancers and promotes expression of genes important for chondrogenesis, including cartilage matrix protein-coding genes COL2A1, COL4A2, COL9A1, COL11A2 and ACAN, SOX5 and SOX6. Also binds to some promoter regions. Plays a central role in successive steps of chondrocyte differentiation. Absolutely required for precartilaginous condensation, the first step in chondrogenesis during which skeletal progenitors differentiate into prechondrocytes. Together with SOX5 and SOX6, required for overt chondrogenesis when condensed prechondrocytes differentiate into early stage chondrocytes, the second step in chondrogenesis. Later, required to direct hypertrophic maturation and block osteoblast differentiation of growth plate chondrocytes: maintains chondrocyte columnar proliferation, delays prehypertrophy and then prevents osteoblastic differentiation of chondrocytes by lowering beta-catenin (CTNNB1) signaling and RUNX2 expression. Also required for chondrocyte hypertrophy, both indirectly, by keeping the lineage fate of chondrocytes, and directly, by remaining present in upper hypertrophic cells and transactivating COL10A1 along with MEF2C. Low lipid levels are the main nutritional determinant for chondrogenic commitment of skeletal progenitor cells: when lipids levels are low, FOXO (FOXO1 and FOXO3) transcription factors promote expression of SOX9, which induces chondrogenic commitment and suppresses fatty acid oxidation. Mechanistically, helps, but is not required, to remove epigenetic signatures of transcriptional repression and deposit active promoter and enhancer marks at chondrocyte-specific genes. Acts in cooperation with the Hedgehog pathway-dependent GLI (GLI1 and GLI3) transcription factors. In addition to cartilage development, also acts as a regulator of proliferation and differentiation in epithelial stem/progenitor cells: involved in the lung epithelium during branching morphogenesis, by balancing proliferation and differentiation and regulating the extracellular matrix. Controls epithelial branching during kidney development. This chain is Transcription factor SOX-9, found in Rattus norvegicus (Rat).